Reading from the N-terminus, the 370-residue chain is uncharacterized protein (370 aa).

A divalent metal cation-binding residues include Asp-152, His-154, Asp-184, Asn-215, His-306, and His-308.

Belongs to the metallophosphoesterase superfamily. The cofactor is a divalent metal cation.

This is an uncharacterized protein from Helicobacter pylori (strain J99 / ATCC 700824) (Campylobacter pylori J99).